Consider the following 257-residue polypeptide: Imidazole glycerol phosphate synthase subunit HisF (257 aa).

Catalysis depends on residues Asp-11 and Asp-130.

Belongs to the HisA/HisF family. As to quaternary structure, heterodimer of HisH and HisF.

The protein resides in the cytoplasm. The enzyme catalyses 5-[(5-phospho-1-deoxy-D-ribulos-1-ylimino)methylamino]-1-(5-phospho-beta-D-ribosyl)imidazole-4-carboxamide + L-glutamine = D-erythro-1-(imidazol-4-yl)glycerol 3-phosphate + 5-amino-1-(5-phospho-beta-D-ribosyl)imidazole-4-carboxamide + L-glutamate + H(+). The protein operates within amino-acid biosynthesis; L-histidine biosynthesis; L-histidine from 5-phospho-alpha-D-ribose 1-diphosphate: step 5/9. Functionally, IGPS catalyzes the conversion of PRFAR and glutamine to IGP, AICAR and glutamate. The HisF subunit catalyzes the cyclization activity that produces IGP and AICAR from PRFAR using the ammonia provided by the HisH subunit. The protein is Imidazole glycerol phosphate synthase subunit HisF of Proteus mirabilis (strain HI4320).